An 803-amino-acid polypeptide reads, in one-letter code: Translation initiation factor IF-2 (803 aa).

Disordered regions lie at residues 93–123 (TKPV…LNEK) and 138–206 (EVKE…ASAK). Polar residues predominate over residues 111–121 (VPPTSDTTNLN). The segment covering 138–155 (EVKEEAKKTPSEKKETPK) has biased composition (basic and acidic residues). Basic residues predominate over residues 156 to 167 (KGPRKETRRSRK). The segment covering 168-188 (PDKEDKWEREELHMTKLVEER) has biased composition (basic and acidic residues). The 170-residue stretch at 302 to 471 (PRAPVVTIMG…LLQAEVLELK (170 aa)) folds into the tr-type G domain. The segment at 311 to 318 (GHVDHGKT) is G1. 311–318 (GHVDHGKT) lines the GTP pocket. Residues 336–340 (GITQH) are G2. The segment at 357–360 (DTPG) is G3. GTP-binding positions include 357-361 (DTPGH) and 411-414 (NKID). Positions 411–414 (NKID) are G4. A G5 region spans residues 447-449 (SAK).

It belongs to the TRAFAC class translation factor GTPase superfamily. Classic translation factor GTPase family. IF-2 subfamily.

The protein localises to the cytoplasm. Its function is as follows. One of the essential components for the initiation of protein synthesis. Protects formylmethionyl-tRNA from spontaneous hydrolysis and promotes its binding to the 30S ribosomal subunits. Also involved in the hydrolysis of GTP during the formation of the 70S ribosomal complex. This is Translation initiation factor IF-2 from Coxiella burnetii (strain RSA 493 / Nine Mile phase I).